We begin with the raw amino-acid sequence, 446 residues long: NADH oxidase (446 aa).

FAD-binding positions include 7 to 11, Asp-32, Cys-42, Val-79, 109 to 112, Lys-131, and Tyr-158; these read GTNHA and ATGS. His-10 serves as the catalytic Proton acceptor. Residue Cys-42 is the Redox-active of the active site. Cys-42 carries the post-translational modification Cysteine sulfinic acid (-SO2H). Ile-159, Asp-178, Tyr-187, and Gly-244 together coordinate NAD(+). Asp-282 serves as a coordination point for FAD. NAD(+) is bound at residue Ala-298. Residues Leu-299, Ala-300, and Ser-301 each coordinate FAD. Residue Gly-329 participates in NAD(+) binding. Phe-427 provides a ligand contact to FAD.

Belongs to the class-III pyridine nucleotide-disulfide oxidoreductase family. In terms of assembly, homodimer. Requires FAD as cofactor.

The catalysed reaction is 2 NADH + O2 + 2 H(+) = 2 NAD(+) + 2 H2O. With respect to regulation, inhibited by hydrogen peroxide, sulfhydryl reagents and quinine, but not by EDTA. Catalyzes the four-electron reduction of molecular oxygen to water. Active on beta-NADH, but not on alpha-NADH, beta-NADPH or alpha-NADPH. Under aerobic conditions, oxygen acts as the electron acceptor. Under anaerobic conditions, DCIP and MB can replace oxygen as the electron acceptor. This is NADH oxidase from Lactococcus lactis subsp. cremoris (strain MG1363).